The primary structure comprises 398 residues: MAKLTVKDVDLKGKKVLVRVDFNVPLKDGVITNDNRITAALPTIKYIIEQGGRAILFSHLGRVKEEADKAGKSLAPVAADLAAKLGQDVVFPGVTRGAELEAAINALEDGQVLLVENTRYEDVDGKKESKNDPELGKYWASLGDGIFVNDAFGTAHRAHASNVGISANVEKAVAGFLLENEIAYIQEAVETPERPFVAILGGSKVSDKIGVIENLLEKADNVLIGGGMTYTFYKAQGIEIGNSLVEEDKLDVAKALLEKANGKLILPVDSKEANAFAGYTEVRDTEGEAVSEGFLGLDIGPKSIAKFDEALTGAKTVVWNGPMGVFENPDFQAGTIGVMDAIVKQPGVKSIIGGGDSAAAAINLGRADKFSWISTGGGASMELLEGKVLPGLAALTEK.

Substrate contacts are provided by residues Asp-21–Asn-23, Arg-36, His-59–Arg-62, Arg-119, and Arg-157. Residues Lys-208, Gly-296, Glu-327, and Gly-354 to Ser-357 each bind ATP.

Belongs to the phosphoglycerate kinase family. In terms of assembly, monomer.

It localises to the cytoplasm. It carries out the reaction (2R)-3-phosphoglycerate + ATP = (2R)-3-phospho-glyceroyl phosphate + ADP. The protein operates within carbohydrate degradation; glycolysis; pyruvate from D-glyceraldehyde 3-phosphate: step 2/5. The sequence is that of Phosphoglycerate kinase from Streptococcus pneumoniae serotype 4 (strain ATCC BAA-334 / TIGR4).